A 198-amino-acid chain; its full sequence is CASP-like protein 2B1 (198 aa).

Over 1–12 the chain is Cytoplasmic; the sequence is MAAAMGLERKAK. Residues 13 to 33 traverse the membrane as a helical segment; that stretch reads VAEVALRCAVCALAALAAALV. The Extracellular portion of the chain corresponds to 34–55; sequence GTGSQTRTFFSLEKKARFTDMK. Residues 56 to 76 form a helical membrane-spanning segment; that stretch reads ALVLLVAAHGAAAVYSLLQLA. Residues 77 to 91 are Cytoplasmic-facing; sequence RCAAAAAWKGGSNGG. A helical membrane pass occupies residues 92-112; sequence AAVVAWSVFSCDQAVAYALMA. The Extracellular portion of the chain corresponds to 113–149; it reads ATAAALQSSVVGKRGQPELQWMPVCGLYGAFCRRVGE. A helical transmembrane segment spans residues 150 to 170; the sequence is GLAAAVAAGLAAVLLAAVSAF. Residues 171 to 198 lie on the Cytoplasmic side of the membrane; sequence NLFRLYGGGGGGRKSSAGAVSGNGANTW.

This sequence belongs to the Casparian strip membrane proteins (CASP) family. In terms of assembly, homodimer and heterodimers.

The protein resides in the cell membrane. The chain is CASP-like protein 2B1 from Oryza sativa subsp. japonica (Rice).